The chain runs to 332 residues: UPF0194 membrane protein YbhG (332 aa).

Residues 1–16 (MMKKPVVIGLAVVVLA) form the signal peptide. Positions 141 to 210 (RTISANDLEN…NLQDSTLIAP (70 aa)) form a coiled coil.

This sequence belongs to the UPF0194 family.

The protein localises to the periplasm. The sequence is that of UPF0194 membrane protein YbhG (ybhG) from Shigella flexneri.